A 201-amino-acid polypeptide reads, in one-letter code: Ras-related protein Rab-1C (201 aa).

Residues 1 to 20 (MGCSPSKEGNGSFSSTSTSF) are disordered. G2 is lipidated: N-myristoyl glycine. The S-palmitoyl cysteine moiety is linked to residue C3. GTP contacts are provided by residues 40 to 48 (GDSGVGKSC), 58 to 65 (FTDSYIST), 88 to 92 (DTAGQ), 146 to 149 (NKCD), and 176 to 178 (SAK). Positions 62–70 (YISTIGVDF) match the Effector region motif.

It belongs to the small GTPase superfamily. Rab family. Although this sequence lacks the C-terminal cysteine motifs subject to isoprenylation in other Rab proteins, it does have N-terminal myristoylation and S-palmitoylation sequence motifs.

The sequence is that of Ras-related protein Rab-1C (Rab1C) from Dictyostelium discoideum (Social amoeba).